We begin with the raw amino-acid sequence, 1322 residues long: Sal-like protein 1 (1322 aa).

Positions 1–41 are disordered; the sequence is MSRRKQAKPQHFQSDPEVASLPRRDGDTEKGQPSRPTKSKD. Residues 22 to 41 show a composition bias toward basic and acidic residues; it reads PRRDGDTEKGQPSRPTKSKD. The C2H2-type 1; atypical zinc finger occupies 43–65; it reads HVCGRCCAEFFELSDLLLHKKSC. Residues 78–128 are disordered; that stretch reads PASPAKTFPPGPSLNDPDDQMKDAANKADQEDCSDLSEPKGLDREESMEVE. Composition is skewed to basic and acidic residues over residues 96-107 and 114-124; these read DQMKDAANKADQ and SEPKGLDREES. Lysine 440 is covalently cross-linked (Glycyl lysine isopeptide (Lys-Gly) (interchain with G-Cter in SUMO2)). 2 C2H2-type zinc fingers span residues 450–472 and 478–500; these read HKCR…LRSH and FKCN…FQRH. Residues 578-659 are disordered; it reads PIPISHSAAS…GGPGGTTFTN (82 aa). Residues 584 to 594 are compositionally biased toward polar residues; it reads SAASPQGSVKS. 3 positions are modified to phosphoserine: serine 591, serine 594, and serine 596. Residues 629–645 are compositionally biased toward polar residues; the sequence is NMASSAVPTAGNSTLNS. Residues lysine 672, lysine 689, and lysine 700 each participate in a glycyl lysine isopeptide (Lys-Gly) (interchain with G-Cter in SUMO2) cross-link. C2H2-type zinc fingers lie at residues 705-727, 733-755, and 765-787; these read NECI…YRTH, FKCK…YSVH, and HSCP…IRMH. Disordered regions lie at residues 789 to 855 and 891 to 961; these read GGQI…SSPL and SMEG…GLSP. Over residues 819-832 the composition is skewed to acidic residues; the sequence is DLDNFSDENMEECP. The span at 842-855 shows a compositional bias: low complexity; that stretch reads SADASQDSLSSSPL. A compositionally biased stretch (polar residues) spans 898-935; sequence TNDSSSVGGDMESQSAGSPAISESTSSMQALSPSNSTQ. Positions 936-948 are enriched in basic and acidic residues; sequence EFHKSPGMEEKPQ. At serine 940 the chain carries Phosphoserine. Residues lysine 946 and lysine 981 each participate in a glycyl lysine isopeptide (Lys-Gly) (interchain with G-Cter in SUMO2) cross-link. 2 consecutive C2H2-type zinc fingers follow at residues 1000–1022 and 1028–1050; these read TACD…YRSH and FICT…MLTH. Residue lysine 1085 forms a Glycyl lysine isopeptide (Lys-Gly) (interchain with G-Cter in SUMO2) linkage. Residues 1094–1119 are disordered; the sequence is VSPQDSKDAPTSHVPQGPLSSSATSP. C2H2-type zinc fingers lie at residues 1133 to 1155 and 1161 to 1183; these read HYCN…ERTH and FACT…MGTH. Residues lysine 1218, lysine 1297, and lysine 1317 each participate in a glycyl lysine isopeptide (Lys-Gly) (interchain with G-Cter in SUMO2) cross-link.

The protein belongs to the sal C2H2-type zinc-finger protein family. In terms of assembly, may associate with NuRD histone deacetylase complex (HDAC). Interacts with components of HDAC complex including HDAC1, HDAC2, RBBP4, RBPP7, MTA1 and MTA2. Interacts with CCNQ. Interacts with NSD2 (via PHD-type zinc fingers 1, 2 and 3). Expressed in the metanephric mesenchyme surrounding ureteric bud.

The protein localises to the nucleus. Functionally, transcriptional repressor involved in organogenesis. Plays an essential role in ureteric bud invasion during kidney development. The chain is Sal-like protein 1 (Sall1) from Mus musculus (Mouse).